Consider the following 262-residue polypeptide: Cytochrome c oxidase subunit 3 (262 aa).

6 helical membrane passes run 39 to 59 (YDISLFVLGNIITILTVYQWW), 83 to 103 (GMILFILSEVLFFVSFFWAFF), 120 to 140 (MGIISFNPFQIPLLNTAILLA), 163 to 183 (GLFFTVLLGIYFTILQAYEYI), 198 to 218 (FFMATGFHGIHVLIGTTFLLV), and 240 to 260 (AWYWHFVDVVWLFLYITIYWW).

This sequence belongs to the cytochrome c oxidase subunit 3 family. As to quaternary structure, component of the cytochrome c oxidase (complex IV, CIV), a multisubunit enzyme composed of a catalytic core of 3 subunits and several supernumerary subunits. The complex exists as a monomer or a dimer and forms supercomplexes (SCs) in the inner mitochondrial membrane with ubiquinol-cytochrome c oxidoreductase (cytochrome b-c1 complex, complex III, CIII).

It is found in the mitochondrion inner membrane. The enzyme catalyses 4 Fe(II)-[cytochrome c] + O2 + 8 H(+)(in) = 4 Fe(III)-[cytochrome c] + 2 H2O + 4 H(+)(out). Its function is as follows. Component of the cytochrome c oxidase, the last enzyme in the mitochondrial electron transport chain which drives oxidative phosphorylation. The respiratory chain contains 3 multisubunit complexes succinate dehydrogenase (complex II, CII), ubiquinol-cytochrome c oxidoreductase (cytochrome b-c1 complex, complex III, CIII) and cytochrome c oxidase (complex IV, CIV), that cooperate to transfer electrons derived from NADH and succinate to molecular oxygen, creating an electrochemical gradient over the inner membrane that drives transmembrane transport and the ATP synthase. Cytochrome c oxidase is the component of the respiratory chain that catalyzes the reduction of oxygen to water. Electrons originating from reduced cytochrome c in the intermembrane space (IMS) are transferred via the dinuclear copper A center (CU(A)) of subunit 2 and heme A of subunit 1 to the active site in subunit 1, a binuclear center (BNC) formed by heme A3 and copper B (CU(B)). The BNC reduces molecular oxygen to 2 water molecules using 4 electrons from cytochrome c in the IMS and 4 protons from the mitochondrial matrix. This Drosophila melanogaster (Fruit fly) protein is Cytochrome c oxidase subunit 3 (mt:CoIII).